Here is a 357-residue protein sequence, read N- to C-terminus: Peptide chain release factor 1 (357 aa).

Position 234 is an N5-methylglutamine (Gln234). The tract at residues 283–313 (SKKQEQRSSNRKQQVGSGDRSERIRTYNFPQ) is disordered.

The protein belongs to the prokaryotic/mitochondrial release factor family. Post-translationally, methylated by PrmC. Methylation increases the termination efficiency of RF1.

It localises to the cytoplasm. Its function is as follows. Peptide chain release factor 1 directs the termination of translation in response to the peptide chain termination codons UAG and UAA. The chain is Peptide chain release factor 1 from Borrelia garinii subsp. bavariensis (strain ATCC BAA-2496 / DSM 23469 / PBi) (Borreliella bavariensis).